We begin with the raw amino-acid sequence, 132 residues long: Extracellular small neutral protease (132 aa).

Ca(2+) is bound by residues Asp76 and Thr78. His83 contacts Zn(2+). Residue Glu84 is part of the active site. Positions 87 and 93 each coordinate Zn(2+). Cys99 and Cys112 are disulfide-bonded.

It belongs to the peptidase M7 family. Requires Ca(2+) as cofactor. The cofactor is Zn(2+).

It localises to the secreted. It carries out the reaction Hydrolyzes proteins with a preference for Tyr or Phe in the P1' position. Has no action on amino-acid p-nitroanilides.. Functionally, specifically hydrolyzes the peptide bond at the imino side of aromatic residues. The chain is Extracellular small neutral protease (snpA) from Streptomyces caespitosus.